The sequence spans 295 residues: MTAHPETPRLGYIGLGNQGAPMAKRLLDWPGGLTVFDVRVEAMAPFVEGGATAAASVSDVAEADIISITVFDDAQVSSVITADNGLATHAKPGTIVAIHSTIADTTAVDLAEKLKPQGIHIVDAPVSGGAAAAAKGELAVMVGADDEAFQRIKEPFSRWASLLIHAGEPGAGTRMKLARNMLTFVSYAAAAEAQRLAEACGLDLVALGKVVRHSDSFTGGAGAIMFRNTTAPMEPADPLRPLLEHTRGLGEKDLSLALALGEVVSVDLPLAQLALQRLAAGLGVPHPDTEPAKET.

Residues 11–25 and threonine 101 each bind NAD(+); that span reads GYIG…MAKR. The active site involves lysine 176. NAD(+) is bound at residue lysine 252.

This sequence belongs to the HIBADH-related family.

This is an uncharacterized protein from Mycobacterium tuberculosis (strain CDC 1551 / Oshkosh).